Consider the following 320-residue polypeptide: rRNA methyltransferase 2, mitochondrial (320 aa).

A mitochondrion-targeting transit peptide spans 1-18; it reads MILVYNRIRSIISSSLGR. S-adenosyl-L-methionine-binding positions include 83 to 86, Asp104, 178 to 179, and Asp203; these read PGAW and DI. Lys264 acts as the Proton acceptor in catalysis.

The protein belongs to the class I-like SAM-binding methyltransferase superfamily. RNA methyltransferase RlmE family.

It localises to the mitochondrion. It carries out the reaction uridine(2791) in 21S rRNA + S-adenosyl-L-methionine = 2'-O-methyluridine(2791) in 21S rRNA + S-adenosyl-L-homocysteine + H(+). S-adenosyl-L-methionine-dependent 2'-O-ribose methyltransferase that catalyzes the formation of 2'-O-methyluridine at position 2791 (Um2791) in the 21S mitochondrial large subunit ribosomal RNA (mtLSU rRNA), a universally conserved modification in the peptidyl transferase domain of the mtLSU rRNA. In Saccharomyces cerevisiae (strain ATCC 204508 / S288c) (Baker's yeast), this protein is rRNA methyltransferase 2, mitochondrial.